A 2556-amino-acid chain; its full sequence is Non-reducing polyketide synthase tazA (2556 aa).

An N-terminal acylcarrier protein transacylase domain (SAT) region spans residues 16 to 270 (LFGPQALSFT…QAIGLRGRFH (255 aa)). Cysteine 143 (nucleophile; for transacylase activity) is an active-site residue. Residue histidine 270 is the Proton donor/acceptor; for transacylase activity of the active site. Positions 397 to 769 (EDEIAVIGMA…GSNASMIVTQ (373 aa)) constitute a Ketosynthase family 3 (KS3) domain. Residues 876 to 1209 (CFGGQISRFV…WAHHCTQAPA (334 aa)) are malonyl-CoA:ACP transacylase (MAT) domain. An N-terminal hotdog fold region spans residues 1254–1383 (YTFVGYQDEG…GQIIFQSAAE (130 aa)). In terms of domain architecture, PKS/mFAS DH spans 1254-1560 (YTFVGYQDEG…YSRLPKSTMS (307 aa)). Positions 1257–1564 (VGYQDEGKRQ…PKSTMSKMLT (308 aa)) are product template (PT) domain. The Proton acceptor; for dehydratase activity role is filled by histidine 1285. The segment at 1408–1560 (DPDDVLQGRN…YSRLPKSTMS (153 aa)) is C-terminal hotdog fold. Catalysis depends on aspartate 1465, which acts as the Proton donor; for dehydratase activity. A disordered region spans residues 1567-1621 (TAPSERRAQVDSPSMPASINAPPSASEQAPVEPAPQTKESAPIAEPGAGGQSNSK). Over residues 1577 to 1593 (DSPSMPASINAPPSASE) the composition is skewed to polar residues. The 75-residue stretch at 1620–1694 (SKVPGIVVEV…DVVQCVHKTL (75 aa)) folds into the Carrier domain. Residue serine 1654 is modified to O-(pantetheine 4'-phosphoryl)serine. The tract at residues 1700-1731 (SAAQESEGNLTPASSGTQSPRSDPVSDTSLSD) is disordered. Polar residues predominate over residues 1702–1731 (AQESEGNLTPASSGTQSPRSDPVSDTSLSD). The segment at 1830–2107 (LEHEGRLIDI…DWTDGHLAEN (278 aa)) is methyltransferase domain. Residues 2180 to 2424 (VTGATGSLGA…WTPVDVVAST (245 aa)) form an NADPH-binding (R) domain region.

Requires pantetheine 4'-phosphate as cofactor.

It participates in secondary metabolite biosynthesis. In terms of biological role, non-reducing polyketide synthase; part of the gene cluster that mediates the biosynthesis of azaterrilone A and other azaphilones, a class of fungal metabolites characterized by a highly oxygenated pyrano-quinone bicyclic core and exhibiting a broad range of bioactivities. The first step of the pathway begins with tazA that assembles one acetyl-CoA starter unit, five malonyl-CoA units, and catalyzes a series of Claisen condensations, methylation, PT-mediated cyclization, and finally releases the first hexaketide precursor through the R-domain. The tazA product then undergoes reduction on its terminal ketone and the following pyran-ring formation by yet undetermined enzyme(s). Dehydration and enoyl reduction, possibly involving the trans-enoyl reductase tazE leads to the next intermediate. TazD is predicted as an acetyltransferase and might catalyze the acetylation steps leading to the synthesis of azaterrilone A. Azaterrilone A is not the final product of the taz pathway and both the highly reducing polyketide synthase tazB and the dual enzyme tazHJ catalyze late steps of the pathway, leading to the production of the 2 final stereoisomers that contain additional polyketide modification whose structures have still to be determined. This chain is Non-reducing polyketide synthase tazA, found in Aspergillus terreus (strain NIH 2624 / FGSC A1156).